The following is a 171-amino-acid chain: Transcriptional repressor NrdR (171 aa).

Residues 3 to 34 fold into a zinc finger; the sequence is CPFCGDPNTQVADTRENEGGEVVRRRRRCPKC. Residues 49–139 enclose the ATP-cone domain; that stretch reads PHIVKRNGNR…VYRNFADVDE (91 aa). The segment at 148-171 is disordered; that stretch reads KARPKRNRPAEPPEPTSENDLFRS.

The protein belongs to the NrdR family. Requires Zn(2+) as cofactor.

Its function is as follows. Negatively regulates transcription of bacterial ribonucleotide reductase nrd genes and operons by binding to NrdR-boxes. The polypeptide is Transcriptional repressor NrdR (Aromatoleum aromaticum (strain DSM 19018 / LMG 30748 / EbN1) (Azoarcus sp. (strain EbN1))).